Consider the following 247-residue polypeptide: VQ motif-containing protein 4 (247 aa).

The tract at residues 1–128 (MENSPRYREA…SSSSASGFRL (128 aa)) is disordered. Phosphoserine is present on Ser16. Over residues 21–37 (NSNNSCGMSSSSESNKP) the composition is skewed to low complexity. Composition is skewed to polar residues over residues 48–75 (RSESGNPYPTTFVQADTSSFKQVVQMLT) and 87–106 (LKPNPTHHQPDPRSTPSSFS). The short motif at 67 to 76 (FKQVVQMLTG) is the VQ element. Phosphoserine is present on residues Ser106, Ser155, Ser163, Ser165, and Ser175. Residue Thr178 is modified to Phosphothreonine. Residues 184 to 247 (PFDRSGSSNQ…VSGSSSASTS (64 aa)) are disordered. Ser194 carries the phosphoserine modification. Residues 200 to 210 (AEEKAMKERGF) show a composition bias toward basic and acidic residues. At Ser215 the chain carries Phosphoserine. A phosphothreonine mark is found at Thr219 and Thr234. Phosphoserine occurs at positions 235, 239, and 243. Positions 236-247 (PRVSGSSSASTS) are enriched in polar residues.

As to quaternary structure, interacts with MPK3 and MPK6. Post-translationally, phosphorylated on serine and threonine residues by MPK6 following treatment with the pathogen-associated molecular pattern (PAMP) flg22. MAP kinase-mediated phosphorylation after PAMP elicitation causes degradation of VQ4, allowing WRKY33 to promote transcription from defense genes.

The protein resides in the nucleus. In terms of biological role, acts as a negative regulator of WRKY33 transcription factor activity in the promotion of defense gene expression. Acts as a negative regulator of pathogen-associated molecular pattern (PAMP)-induced responses to modulate resistance to pathogens. This chain is VQ motif-containing protein 4, found in Arabidopsis thaliana (Mouse-ear cress).